The chain runs to 375 residues: 23S rRNA (uracil(747)-C(5))-methyltransferase RlmC (375 aa).

Residues Cys-3, Cys-11, Cys-14, and Cys-87 each coordinate [4Fe-4S] cluster. Residues Gln-212, Phe-241, Glu-262, and Asn-307 each coordinate S-adenosyl-L-methionine. Cys-334 functions as the Nucleophile in the catalytic mechanism.

It belongs to the class I-like SAM-binding methyltransferase superfamily. RNA M5U methyltransferase family. RlmC subfamily.

It carries out the reaction uridine(747) in 23S rRNA + S-adenosyl-L-methionine = 5-methyluridine(747) in 23S rRNA + S-adenosyl-L-homocysteine + H(+). Its function is as follows. Catalyzes the formation of 5-methyl-uridine at position 747 (m5U747) in 23S rRNA. This is 23S rRNA (uracil(747)-C(5))-methyltransferase RlmC from Enterobacter sp. (strain 638).